Reading from the N-terminus, the 528-residue chain is Na(+)/H(+) antiporter NhaB (528 aa).

10 consecutive transmembrane segments (helical) span residues 11 to 31, 67 to 87, 98 to 118, 140 to 160, 240 to 260, 311 to 331, 350 to 370, 391 to 411, 449 to 469, and 476 to 496; these read VNFLGNSPKWYKLAILSFLVI, PGGLLAIQAVAIGMTSPSQVL, LLLIFMVAGIYFMKQLLLFVF, AFLSAFLDALTVIAVIIAVGI, FFIRMSPVTIPVLLSGLLTCV, LVAGLALHLASVGLIGLSVII, EEALPFTALLAVFFAIVGVII, LVVFFIANGVLSMVSDNVFVG, ATPNGQAAFLFLLTSALAPLI, and MVIMALPYTLVLSIVGIVTIE.

The protein belongs to the NhaB Na(+)/H(+) (TC 2.A.34) antiporter family.

The protein resides in the cell inner membrane. The catalysed reaction is 2 Na(+)(in) + 3 H(+)(out) = 2 Na(+)(out) + 3 H(+)(in). In terms of biological role, na(+)/H(+) antiporter that extrudes sodium in exchange for external protons. The polypeptide is Na(+)/H(+) antiporter NhaB (Shewanella denitrificans (strain OS217 / ATCC BAA-1090 / DSM 15013)).